The following is a 231-amino-acid chain: uncharacterized protein (231 aa).

Positions 1 to 19 (MKFKFLLTPLLSSVLFLSA) are cleaved as a signal peptide. Residue C20 is the site of N-palmitoyl cysteine attachment. A lipid anchor (S-diacylglycerol cysteine) is attached at C20.

This sequence belongs to the MG439/MG440 family.

Its subcellular location is the cell membrane. This is an uncharacterized protein from Mycoplasma pneumoniae (strain ATCC 29342 / M129 / Subtype 1) (Mycoplasmoides pneumoniae).